The chain runs to 119 residues: Holo-[acyl-carrier-protein] synthase (119 aa).

Mg(2+) is bound by residues aspartate 8 and glutamate 58.

This sequence belongs to the P-Pant transferase superfamily. AcpS family. Requires Mg(2+) as cofactor.

The protein localises to the cytoplasm. The catalysed reaction is apo-[ACP] + CoA = holo-[ACP] + adenosine 3',5'-bisphosphate + H(+). Transfers the 4'-phosphopantetheine moiety from coenzyme A to a Ser of acyl-carrier-protein. This chain is Holo-[acyl-carrier-protein] synthase, found in Streptococcus thermophilus (strain CNRZ 1066).